A 223-amino-acid chain; its full sequence is Cytidylate kinase (223 aa).

10-18 (GPASSGKST) contacts ATP.

The protein belongs to the cytidylate kinase family. Type 1 subfamily.

The protein localises to the cytoplasm. The catalysed reaction is CMP + ATP = CDP + ADP. It catalyses the reaction dCMP + ATP = dCDP + ADP. In Streptococcus pneumoniae (strain 70585), this protein is Cytidylate kinase.